The following is a 688-amino-acid chain: Sodium channel and clathrin linker 1 (688 aa).

At A2 the chain carries N-acetylalanine. Coiled coils occupy residues 59 to 108 and 152 to 673; these read LIAE…AVEK and QTAS…SVIT. Position 681 is a phosphoserine (S681).

In terms of assembly, interacts with SCN10A and clathrin. Identified in a complex containing SCN10A, clathrin and SCLT1.

It localises to the cytoplasm. The protein localises to the cytoskeleton. Its subcellular location is the microtubule organizing center. It is found in the centrosome. The protein resides in the centriole. Functionally, adapter protein that links SCN10A to clathrin. Regulates SCN10A channel activity, possibly by promoting channel internalization. The sequence is that of Sodium channel and clathrin linker 1 (Sclt1) from Mus musculus (Mouse).